We begin with the raw amino-acid sequence, 559 residues long: Potassium-transporting ATPase potassium-binding subunit (559 aa).

The next 12 membrane-spanning stretches (helical) occupy residues 5–25, 63–83, 131–151, 173–193, 254–274, 282–302, 327–347, 356–376, 379–399, 416–436, 483–503, and 525–545; these read GFLL…PLGT, LLAI…LLML, VGLT…VFAL, ITLW…IQQG, VQML…GEVV, AILW…MWAE, FGIL…CGAV, ALGG…FGGV, GLYG…LMVG, MIAL…ALAM, LLLA…VMAI, and ALFI…TFIP.

The protein belongs to the KdpA family. As to quaternary structure, the system is composed of three essential subunits: KdpA, KdpB and KdpC.

The protein localises to the cell inner membrane. Functionally, part of the high-affinity ATP-driven potassium transport (or Kdp) system, which catalyzes the hydrolysis of ATP coupled with the electrogenic transport of potassium into the cytoplasm. This subunit binds the periplasmic potassium ions and delivers the ions to the membrane domain of KdpB through an intramembrane tunnel. This is Potassium-transporting ATPase potassium-binding subunit from Klebsiella pneumoniae (strain 342).